We begin with the raw amino-acid sequence, 91 residues long: DNA-directed RNA polymerase subunit omega (91 aa).

This sequence belongs to the RNA polymerase subunit omega family. The RNAP catalytic core consists of 2 alpha, 1 beta, 1 beta' and 1 omega subunit. When a sigma factor is associated with the core the holoenzyme is formed, which can initiate transcription.

The enzyme catalyses RNA(n) + a ribonucleoside 5'-triphosphate = RNA(n+1) + diphosphate. Its function is as follows. Promotes RNA polymerase assembly. Latches the N- and C-terminal regions of the beta' subunit thereby facilitating its interaction with the beta and alpha subunits. In Actinobacillus pleuropneumoniae serotype 5b (strain L20), this protein is DNA-directed RNA polymerase subunit omega.